The sequence spans 302 residues: Proline dehydrogenase 1 (302 aa).

Lys-95 serves as a coordination point for substrate. The active site involves Asp-129. The FAD site is built by Met-130 and Gln-158. Arg-179 is a catalytic residue. Residues 182–184 (KGA) and 221–222 (TH) contribute to the FAD site. A substrate-binding site is contributed by 283-284 (RR).

This sequence belongs to the proline oxidase family. FAD is required as a cofactor.

The enzyme catalyses L-proline + a quinone = (S)-1-pyrroline-5-carboxylate + a quinol + H(+). The protein operates within amino-acid degradation; L-proline degradation into L-glutamate; L-glutamate from L-proline: step 1/2. Its function is as follows. Converts proline to delta-1-pyrroline-5-carboxylate. This is Proline dehydrogenase 1 (fadM) from Bacillus subtilis subsp. natto.